The chain runs to 1043 residues: Unconventional myosin-Ia (1043 aa).

In terms of domain architecture, Myosin motor spans 8-694; it reads VGVEDLILLE…TLFYLEEQRR (687 aa). 101–108 contributes to the ATP binding site; the sequence is GESGAGKT. The interval 571 to 593 is actin-binding; the sequence is VAVLMKNLYSKNPNYIRCIKPND. 3 consecutive IQ domains span residues 697 to 719, 720 to 742, and 743 to 772; these read LQQLATLIQKVYRGWRCRTHYQQ, MRKSQILISAWFRGNKQKKHYGK, and IRSSVLLIQAFVRGWRARKNYRKYFRSGAA. Residues 858–1042 enclose the TH1 domain; it reads KASYPQSVPI…KGSNAMEVTV (185 aa).

Belongs to the TRAFAC class myosin-kinesin ATPase superfamily. Myosin family. In terms of processing, phosphorylated by ALPK1.

In terms of biological role, involved in directing the movement of organelles along actin filaments. This chain is Unconventional myosin-Ia (Myo1a), found in Mus musculus (Mouse).